Here is a 621-residue protein sequence, read N- to C-terminus: Chaperone protein HtpG (621 aa).

The segment at 1–328 (MKQEKKKFDA…SEDLPLNISR (328 aa)) is a; substrate-binding. The interval 329–544 (ESLQHNNVLE…EAAMDIRMER (216 aa)) is b. The segment at 479-498 (VDQATSSSEEKNKDDKKSDD) is disordered. Residues 486 to 498 (SEEKNKDDKKSDD) are compositionally biased toward basic and acidic residues. Residues 545–621 (FLIEQKQIAN…LNDIVQKAIL (77 aa)) are c.

This sequence belongs to the heat shock protein 90 family. As to quaternary structure, homodimer.

It is found in the cytoplasm. Molecular chaperone. Has ATPase activity. The protein is Chaperone protein HtpG of Rickettsia bellii (strain OSU 85-389).